Here is a 185-residue protein sequence, read N- to C-terminus: HTH-type transcriptional regulator Hpr (185 aa).

Residues 13–157 (AMIFSQRIAQ…LIAILRNIYG (145 aa)) enclose the HTH marR-type domain. A DNA-binding region (H-T-H motif) is located at residues 63 to 86 (ISEIAKFGVMHVSTAFNFSKKLEE).

As to quaternary structure, homodimer.

Functionally, negative regulator of protease production and sporulation. The chain is HTH-type transcriptional regulator Hpr from Bacillus anthracis (strain CDC 684 / NRRL 3495).